A 572-amino-acid polypeptide reads, in one-letter code: MRTSQYLFSTLKETPNDAQVVSHQLMLRAGMIRPMASGLYNWLPTGIRVLKKVEKIIREEMNKGGAIEVLMPVVQPAELWEESGRWDQYGPELLRFEDRGNRNFVLGPTHEEVITDLVRREVSSYKQLPLNLYQIQTKFRDEVRPRFGVMRSREFIMKDAYSFHTTQESLQATYDVMYQVYSNIFNRLGLDFRAVQADTGSIGGSASHEFQVLASSGEDDVVFSTESDFAANIELAEAIAIGERQAPTAEMCLVDTPNAKTIAELVEQFNLPIEKTVKTLIVKGADENQPLVALIIRGDHELNEIKAQKHPLVADPLEFADETEIKAKIGAGVGSLGAVNLNIPAIIDRTVALMSDFSCGANIDGKHYFNVNWVRDVAMPEVFDLRNVVEGDPSPDGKGTLQIKRGIEVGHIFQLGKKYSEAMKATVQGEDGKPLVMTMGCYGIGVTRVVASAIEQHHDERGIIWPSDEIAPFTVAIVPMNMHKSEAVQKYAEELYRTLQSQGVDVIFDDRKERPGVMFADMELIGIPHMVVIGEKNLDNGEIEYKNRRTGEKEMISKDKLLSVLNEKLGNL.

Belongs to the class-II aminoacyl-tRNA synthetase family. ProS type 1 subfamily. As to quaternary structure, homodimer.

It localises to the cytoplasm. It carries out the reaction tRNA(Pro) + L-proline + ATP = L-prolyl-tRNA(Pro) + AMP + diphosphate. Its function is as follows. Catalyzes the attachment of proline to tRNA(Pro) in a two-step reaction: proline is first activated by ATP to form Pro-AMP and then transferred to the acceptor end of tRNA(Pro). As ProRS can inadvertently accommodate and process non-cognate amino acids such as alanine and cysteine, to avoid such errors it has two additional distinct editing activities against alanine. One activity is designated as 'pretransfer' editing and involves the tRNA(Pro)-independent hydrolysis of activated Ala-AMP. The other activity is designated 'posttransfer' editing and involves deacylation of mischarged Ala-tRNA(Pro). The misacylated Cys-tRNA(Pro) is not edited by ProRS. This Haemophilus influenzae (strain PittGG) protein is Proline--tRNA ligase.